A 472-amino-acid polypeptide reads, in one-letter code: Tail hub protein gp10 (472 aa).

Monomer (in solution). Hexamer; assembles as a hexamer onto the dodecamer formed by the head-to-tail adapter gp4. Interacts with the head-to-tail adapter protein gp4; each gp10 monomer contacts 2 head-to-tail adapter protein gp4. Interacts with the tail needle protein gp26. Interacts with the tail spike protein gp9; binds six tail spike trimers.

It localises to the virion. Its function is as follows. Acts as a tail hub by assembling onto the head-to-tail adapter protein gp4, generating a channel that is sealed by the tail needle protein gp26. Together with gp4 and gp26, gp10 is required for stabilization of the condensed DNA within the capsid; perhaps by plugging the hole through which the DNA enters. The polypeptide is Tail hub protein gp10 (10) (Salmonella phage P22 (Bacteriophage P22)).